Consider the following 696-residue polypeptide: L-amino-acid oxidase (696 aa).

A propeptide spanning residues 1–130 is cleaved from the precursor; that stretch reads MKWSAAAGAA…IKMRRDLKAR (130 aa). FAD is bound by residues Glu207, Arg215, 236-237, and Val440; that span reads MR. Arg237 provides a ligand contact to substrate. Tyr564 serves as a coordination point for substrate. FAD contacts are provided by residues Glu649 and 658–661; that span reads IASA.

It belongs to the flavin monoamine oxidase family. FAD serves as cofactor.

It carries out the reaction an L-alpha-amino acid + O2 + H2O = a 2-oxocarboxylate + H2O2 + NH4(+). The polypeptide is L-amino-acid oxidase (lox) (Neurospora crassa (strain ATCC 24698 / 74-OR23-1A / CBS 708.71 / DSM 1257 / FGSC 987)).